A 230-amino-acid polypeptide reads, in one-letter code: Zein-alpha 19A2 (230 aa).

The first 18 residues, 1–18 (KIFCFLMLLGLSASAATA), serve as a signal peptide directing secretion.

This sequence belongs to the zein family.

Its function is as follows. Zeins are major seed storage proteins. The chain is Zein-alpha 19A2 from Zea mays (Maize).